The sequence spans 382 residues: Pyrimidine monooxygenase RutA (382 aa).

FMN-binding positions include 68-69 (IK), N134, E143, 159-160 (RY), and S209.

Belongs to the NtaA/SnaA/DszA monooxygenase family. RutA subfamily.

It catalyses the reaction uracil + FMNH2 + NADH + O2 = (Z)-3-ureidoacrylate + FMN + NAD(+) + H2O + H(+). It carries out the reaction thymine + FMNH2 + NADH + O2 = (Z)-2-methylureidoacrylate + FMN + NAD(+) + H2O + H(+). Its function is as follows. Catalyzes the pyrimidine ring opening between N-3 and C-4 by an unusual flavin hydroperoxide-catalyzed mechanism, adding oxygen atoms in the process to yield ureidoacrylate peracid, that immediately reacts with FMN forming ureidoacrylate and FMN-N(5)-oxide. The FMN-N(5)-oxide reacts spontaneously with NADH to produce FMN. Requires the flavin reductase RutF to regenerate FMN in vivo. The chain is Pyrimidine monooxygenase RutA from Escherichia coli O45:K1 (strain S88 / ExPEC).